The following is a 298-amino-acid chain: ATP phosphoribosyltransferase (298 aa).

It belongs to the ATP phosphoribosyltransferase family. Long subfamily. The cofactor is Mg(2+).

It is found in the cytoplasm. It catalyses the reaction 1-(5-phospho-beta-D-ribosyl)-ATP + diphosphate = 5-phospho-alpha-D-ribose 1-diphosphate + ATP. The protein operates within amino-acid biosynthesis; L-histidine biosynthesis; L-histidine from 5-phospho-alpha-D-ribose 1-diphosphate: step 1/9. With respect to regulation, feedback inhibited by histidine. In terms of biological role, catalyzes the condensation of ATP and 5-phosphoribose 1-diphosphate to form N'-(5'-phosphoribosyl)-ATP (PR-ATP). Has a crucial role in the pathway because the rate of histidine biosynthesis seems to be controlled primarily by regulation of HisG enzymatic activity. The polypeptide is ATP phosphoribosyltransferase (Aeromonas hydrophila subsp. hydrophila (strain ATCC 7966 / DSM 30187 / BCRC 13018 / CCUG 14551 / JCM 1027 / KCTC 2358 / NCIMB 9240 / NCTC 8049)).